The sequence spans 1499 residues: B-cell CLL/lymphoma 9-like protein (1499 aa).

Disordered stretches follow at residues 1–238 (MRIL…PPSQ) and 271–500 (VPRA…MGQQ). Residues 20–37 (GSPPLSPRGHCPPAPAKP) show a composition bias toward pro residues. A phosphoserine mark is found at S21 and S25. K36 carries the N6-acetyllysine modification. Composition is skewed to polar residues over residues 45–70 (TNHG…TCNV) and 85–96 (NQISPSNSSLKN). The residue at position 88 (S88) is a Phosphoserine. N6-acetyllysine is present on residues K108 and K110. Basic and acidic residues-rich tracts occupy residues 114–126 (DRSV…EQRE) and 134–153 (SEAK…ERKQ). S116 and S118 each carry phosphoserine. K137 is modified (N6-acetyllysine). Polar residues predominate over residues 193–205 (PGQTTQLPLSESS). Residues 222–232 (PGGGGGGGGVP) show a composition bias toward gly residues. 2 stretches are compositionally biased toward pro residues: residues 281–291 (KVPPTPEPLPL) and 301–325 (SQPP…PPEG). Residues 304–533 (PPLPPPPPPA…QEEYYEEKRR (230 aa)) form a necessary for interaction with CTNNB1 region. 2 stretches are compositionally biased toward low complexity: residues 351 to 363 (THPN…TANN) and 370 to 387 (DPSS…AAPG). The span at 399-421 (LSKEQLEHRERSLQTLRDIERLL) shows a compositional bias: basic and acidic residues. S424 bears the Phosphoserine mark. Over residues 445–458 (AQAPPPPQQPPTAP) the composition is skewed to pro residues. Position 514 is a phosphothreonine (T514). Residue R680 is modified to Asymmetric dimethylarginine. S750, S813, S915, S926, S938, S942, S947, S975, S987, S991, S997, S1004, S1010, and S1017 each carry phosphoserine. 2 disordered regions span residues 888–1084 (SHMP…QNPL) and 1116–1201 (ELLP…PQNS). Polar residues predominate over residues 935–960 (PTLSQVHSPLVTSPSANLKSPQTPSQ). The span at 978–996 (VLGSSLSVRSPTGSPSRLK) shows a compositional bias: polar residues. Polar residues-rich tracts occupy residues 1019–1041 (GVSQ…NMEQ) and 1069–1084 (LPFT…QNPL). Composition is skewed to pro residues over residues 1122-1132 (PLLPPPPPPQG) and 1168-1179 (HEPPPAMLPSPT). Residue K1344 forms a Glycyl lysine isopeptide (Lys-Gly) (interchain with G-Cter in SUMO2) linkage.

This sequence belongs to the BCL9 family. In terms of assembly, found in a complex with CDC73; CTNNB1 and PYGO1. Interacts with CTNNB1. As to expression, expressed in breast, ductal and invasive ductal carcinomas of the breast, sporadic colorectal adenomas and carcinomas (at protein level). Expressed in fetal brain. Expressed in lung, amygdala, eye, prostate, pancreatic and prostate cancers, head and neck tumors and embryonal tumor.

It is found in the nucleus. In terms of biological role, transcriptional regulator that acts as an activator. Promotes beta-catenin transcriptional activity. Plays a role in tumorigenesis. Enhances the neoplastic transforming activity of CTNNB1. This chain is B-cell CLL/lymphoma 9-like protein (BCL9L), found in Homo sapiens (Human).